The sequence spans 101 residues: Small ribosomal subunit protein uS14 (101 aa).

This sequence belongs to the universal ribosomal protein uS14 family. In terms of assembly, part of the 30S ribosomal subunit. Contacts proteins S3 and S10.

Binds 16S rRNA, required for the assembly of 30S particles and may also be responsible for determining the conformation of the 16S rRNA at the A site. The protein is Small ribosomal subunit protein uS14 of Aromatoleum aromaticum (strain DSM 19018 / LMG 30748 / EbN1) (Azoarcus sp. (strain EbN1)).